A 261-amino-acid polypeptide reads, in one-letter code: Pyridoxine 5'-phosphate synthase (261 aa).

A 3-amino-2-oxopropyl phosphate-binding site is contributed by asparagine 6. Residue 8-9 (DH) participates in 1-deoxy-D-xylulose 5-phosphate binding. Arginine 17 is a 3-amino-2-oxopropyl phosphate binding site. The active-site Proton acceptor is the histidine 42. 1-deoxy-D-xylulose 5-phosphate contacts are provided by arginine 44 and histidine 49. Glutamate 69 functions as the Proton acceptor in the catalytic mechanism. 1-deoxy-D-xylulose 5-phosphate is bound at residue threonine 99. The active-site Proton donor is the histidine 213. 3-amino-2-oxopropyl phosphate-binding positions include glycine 214 and 235 to 236 (GQ).

This sequence belongs to the PNP synthase family. As to quaternary structure, homooctamer; tetramer of dimers.

The protein resides in the cytoplasm. The enzyme catalyses 3-amino-2-oxopropyl phosphate + 1-deoxy-D-xylulose 5-phosphate = pyridoxine 5'-phosphate + phosphate + 2 H2O + H(+). It functions in the pathway cofactor biosynthesis; pyridoxine 5'-phosphate biosynthesis; pyridoxine 5'-phosphate from D-erythrose 4-phosphate: step 5/5. In terms of biological role, catalyzes the complicated ring closure reaction between the two acyclic compounds 1-deoxy-D-xylulose-5-phosphate (DXP) and 3-amino-2-oxopropyl phosphate (1-amino-acetone-3-phosphate or AAP) to form pyridoxine 5'-phosphate (PNP) and inorganic phosphate. The protein is Pyridoxine 5'-phosphate synthase of Aliarcobacter butzleri (strain RM4018) (Arcobacter butzleri).